A 631-amino-acid polypeptide reads, in one-letter code: MPRPVLSVTAFCHRLGKRESKRSFMGNSSNSWSHASFPKLELGLGQRPSPPRESPTCSICLERLREPISLDCGHDFCIRCFSTHRIPGCELPCCPECRKICKQKKGLRSLGERMKLLPQRPLPPALQETCAVRAERLLLVRINASGGLILRMGAINRCLKHPLARDTPVCLLAVLGEQHSGKSFLLDHLLRGLPGLESGDSTRPRAEGSLPGIRWGANGLTRGIWMWSHPFLLGKEGKKVAVFLVDTGDVMSPELSRETRVKLCALTMMLSSYQILNTSQELKDTDLGYLEMFVHVAEVMGKHYGMVPIQHLDLLVRDSSHHNKSGQGHVGDILQKLSGKYPKVQELLLGKRARCYLLPAPERQWVNKGQASPGGNTEDDFSHHFRAYISDVLSTAPQHAKSRCQGYWSEGRAMARGDRRLLTGQQLAQEIKNLSGWMGKSGPSFSSPDEMAAQLHDLRKVEAAKKEFEEYVRQQDIATKRIFSALRVLPDTMRNLLSTQKDAILARHGVALLCKEREQTLEALEAELQAEAKAFMDSYTMRFCGHLAAVGGAVGAGLMGLAGGVVGAGMAAAALAAEAGMVAAGAAVGATGAAVVGGGVGAGLAATVGCMEKEEDERVQGGDREPLLQEE.

The RING-type zinc-finger motif lies at 57-98 (CSICLERLREPISLDCGHDFCIRCFSTHRIPGCELPCCPECR). The tract at residues 131–631 (AVRAERLLLV…GDREPLLQEE (501 aa)) is interaction with ZBTB16. One can recognise a GB1/RHD3-type G domain in the interval 166–397 (DTPVCLLAVL…YISDVLSTAP (232 aa)). GTP is bound at residue 317-318 (RD). The next 2 membrane-spanning stretches (helical) occupy residues 547–567 (LAAV…GVVG) and 580–600 (GMVA…GGGV).

The protein belongs to the TRAFAC class dynamin-like GTPase superfamily. GB1/RHD3 GTPase family. GB1 subfamily. In terms of assembly, self-associates. Interacts with SP1 in an oxidative stress-regulated manner. Interacts with SIGMAR1 in an oxidative stress-regulated manner. Interacts with ZBTB16 (via C2H2-type zinc finger domains 1 and 2). Auto-ubiquitinated. As to expression, predominantly expressed in brain.

It is found in the membrane. The protein localises to the cytoplasm. Its subcellular location is the nucleus. It localises to the nuclear body. The protein resides in the nucleoplasm. It is found in the endosome. The protein localises to the cytoplasmic vesicle. Its subcellular location is the secretory vesicle. It localises to the synaptic vesicle. The protein resides in the postsynaptic density. It is found in the perikaryon. The protein localises to the cell projection. Its subcellular location is the neuron projection. The catalysed reaction is S-ubiquitinyl-[E2 ubiquitin-conjugating enzyme]-L-cysteine + [acceptor protein]-L-lysine = [E2 ubiquitin-conjugating enzyme]-L-cysteine + N(6)-ubiquitinyl-[acceptor protein]-L-lysine.. It functions in the pathway protein modification; protein ubiquitination. In terms of biological role, E3 ubiquitin-protein ligase that plays an important role in neuronal differentiation, including neurogenesis and gliogenesis, during brain development. During embryonic development initiates neuronal differentiation by inducing cell cycle arrest at the G0/G1 phase through up-regulation of cell-cycle regulatory proteins. Plays a role not only in the fetal period during the development of the nervous system, but also in the adult brain, where it is involved in the maintenance of neural functions and protection of the nervous tissue cells from oxidative stress-induced damage. Exhibits GTPase and E3 ubiquitin-protein ligase activities. Regulates dendritic spine density and synaptic neurotransmission; its ability to hydrolyze GTP is involved in the maintenance of dendritic spine density. This is RING finger protein 112 (Rnf112) from Rattus norvegicus (Rat).